The chain runs to 381 residues: Cytochrome b (381 aa).

4 helical membrane-spanning segments follow: residues phenylalanine 34–methionine 54, tryptophan 78–isoleucine 99, tryptophan 114–leucine 134, and phenylalanine 179–threonine 199. Heme b contacts are provided by histidine 84 and histidine 98. The heme b site is built by histidine 183 and histidine 197. Histidine 202 serves as a coordination point for a ubiquinone. 4 helical membrane-spanning segments follow: residues methionine 227–threonine 247, leucine 289–histidine 309, methionine 321–serine 341, and phenylalanine 348–proline 368.

It belongs to the cytochrome b family. As to quaternary structure, the cytochrome bc1 complex contains 11 subunits: 3 respiratory subunits (MT-CYB, CYC1 and UQCRFS1), 2 core proteins (UQCRC1 and UQCRC2) and 6 low-molecular weight proteins (UQCRH/QCR6, UQCRB/QCR7, UQCRQ/QCR8, UQCR10/QCR9, UQCR11/QCR10 and a cleavage product of UQCRFS1). This cytochrome bc1 complex then forms a dimer. Heme b serves as cofactor.

It is found in the mitochondrion inner membrane. In terms of biological role, component of the ubiquinol-cytochrome c reductase complex (complex III or cytochrome b-c1 complex) that is part of the mitochondrial respiratory chain. The b-c1 complex mediates electron transfer from ubiquinol to cytochrome c. Contributes to the generation of a proton gradient across the mitochondrial membrane that is then used for ATP synthesis. The polypeptide is Cytochrome b (MT-CYB) (Nothoprocta perdicaria (Chilean tinamou)).